Consider the following 228-residue polypeptide: Cytokinin riboside 5'-monophosphate phosphoribohydrolase LOG5 (228 aa).

Substrate is bound by residues Glu-79, 97–98 (RK), and 114–120 (GYGTLEE).

The protein belongs to the LOG family. Expressed in roots and shoots. Detected in vascular tissues of roots, cotyledons, and leaves, axillary buds, immature and mature flowers, fruit abscission zones and ovules.

It is found in the cytoplasm. Its subcellular location is the nucleus. It carries out the reaction N(6)-(dimethylallyl)adenosine 5'-phosphate + H2O = N(6)-dimethylallyladenine + D-ribose 5-phosphate. The catalysed reaction is 9-ribosyl-trans-zeatin 5'-phosphate + H2O = trans-zeatin + D-ribose 5-phosphate. Cytokinin-activating enzyme working in the direct activation pathway. Phosphoribohydrolase that converts inactive cytokinin nucleotides to the biologically active free-base forms. The sequence is that of Cytokinin riboside 5'-monophosphate phosphoribohydrolase LOG5 (LOG5) from Arabidopsis thaliana (Mouse-ear cress).